Reading from the N-terminus, the 288-residue chain is Polyamine aminopropyltransferase (288 aa).

A PABS domain is found at 9-238 (ETLHDQFGQY…GIMTFAWATD (230 aa)). Gln-33 contributes to the S-methyl-5'-thioadenosine binding site. The spermidine site is built by His-64 and Asp-88. Residues Glu-108 and 140 to 141 (DG) each bind S-methyl-5'-thioadenosine. Asp-158 (proton acceptor) is an active-site residue. A spermidine-binding site is contributed by 158–161 (DCTD). An S-methyl-5'-thioadenosine-binding site is contributed by Pro-165.

The protein belongs to the spermidine/spermine synthase family. Homodimer or homotetramer.

It localises to the cytoplasm. It carries out the reaction S-adenosyl 3-(methylsulfanyl)propylamine + putrescine = S-methyl-5'-thioadenosine + spermidine + H(+). It participates in amine and polyamine biosynthesis; spermidine biosynthesis; spermidine from putrescine: step 1/1. Functionally, catalyzes the irreversible transfer of a propylamine group from the amino donor S-adenosylmethioninamine (decarboxy-AdoMet) to putrescine (1,4-diaminobutane) to yield spermidine. The protein is Polyamine aminopropyltransferase of Escherichia coli O81 (strain ED1a).